Reading from the N-terminus, the 419-residue chain is Ribosome biogenesis protein NOP53 (419 aa).

2 disordered regions span residues 1 to 21 (MGIK…KNKR) and 233 to 283 (KAFE…KIRQ). Residues 233 to 261 (KAFEDKGLVSDQDVNHSIDSDDQSEHEQA) are compositionally biased toward basic and acidic residues. Residues Ser242, Ser249, Ser252, and Ser256 each carry the phosphoserine modification. The span at 269–283 (KNKRKTRSQRNKIRQ) shows a compositional bias: basic residues.

Belongs to the NOP53 family.

It is found in the nucleus. It localises to the nucleolus. The protein resides in the nucleoplasm. In terms of biological role, may play a role in ribosome biogenesis. This chain is Ribosome biogenesis protein NOP53, found in Schizosaccharomyces pombe (strain 972 / ATCC 24843) (Fission yeast).